The sequence spans 177 residues: Protein TERMINAL FLOWER 1 (177 aa).

Belongs to the phosphatidylethanolamine-binding protein family. In terms of tissue distribution, expressed below the apical dome of inflorescence and coflorescence meristems, and in inflorescence stem.

It is found in the cytoplasm. Its function is as follows. Controls inflorescence meristem identity and is required for maintenance of an indeterminate inflorescence. Prevents the expression of 'APETALA1' and 'LEAFY'. Also plays a role in the regulation of the time of flowering in the long-day flowering pathway. May form complexes with phosphorylated ligands by interfering with kinases and their effectors. This is Protein TERMINAL FLOWER 1 (TFL1) from Arabidopsis thaliana (Mouse-ear cress).